A 209-amino-acid polypeptide reads, in one-letter code: Probable calcium-binding protein CML36 (209 aa).

Positions 22 to 59 (SKSPTAFSFGSASSSSGQDCKNSGGDGGGGSVTPTSIL) are disordered. Over residues 27-38 (AFSFGSASSSSG) the composition is skewed to low complexity. 4 EF-hand domains span residues 66–101 (YSYV…LGPD), 103–138 (LTEE…LDPA), 139–174 (RDST…IGDE), and 176–209 (CTLD…DLQR). Ca(2+) is bound by residues D79, D81, D83, and D90. The Ca(2+) site is built by D152, D154, D156, E163, D189, D191, D193, and E200.

Functionally, potential calcium sensor. In Arabidopsis thaliana (Mouse-ear cress), this protein is Probable calcium-binding protein CML36 (CML36).